The following is a 62-amino-acid chain: Beta-defensin 133 (62 aa).

An N-terminal signal peptide occupies residues 1–21 (MKIHIFLFVLFFFLVPIATRG). Disulfide bonds link Cys32-Cys60 and Cys39-Cys53.

The protein belongs to the beta-defensin family.

The protein localises to the secreted. Its function is as follows. Has antibacterial activity. This Pan troglodytes (Chimpanzee) protein is Beta-defensin 133 (DEFB133).